We begin with the raw amino-acid sequence, 416 residues long: 2-aminoadipate transaminase (416 aa).

Pyridoxal 5'-phosphate-binding positions include 102–103 (GA) and Q233. K259 carries the post-translational modification N6-(pyridoxal phosphate)lysine. T288 contacts pyridoxal 5'-phosphate.

Belongs to the class-III pyridoxal-phosphate-dependent aminotransferase family. The cofactor is pyridoxal 5'-phosphate.

It carries out the reaction L-2-aminoadipate + 2-oxoglutarate = 2-oxoadipate + L-glutamate. The catalysed reaction is 5-aminopentanoate + 2-oxoglutarate = 5-oxopentanoate + L-glutamate. The protein operates within amino-acid degradation. Catalyzes the conversion of 2-aminoadipate (2AA) to 2-oxoadipate (2OA). Is most active on L-2-aminoadipate (L-2AA) and shows only weak activity on the enantiomer, D-2-aminoadipate (D-2AA). Shows moderate activity on 5-aminovalerate (5AVA) and weak activity toward 4-aminobutyrate (GABA). Is involved in a D-lysine catabolic pathway. This chain is 2-aminoadipate transaminase, found in Pseudomonas putida (strain ATCC 47054 / DSM 6125 / CFBP 8728 / NCIMB 11950 / KT2440).